A 637-amino-acid polypeptide reads, in one-letter code: 1-deoxy-D-xylulose-5-phosphate synthase (637 aa).

Thiamine diphosphate is bound by residues histidine 72 and 113 to 115 (GHA). Aspartate 144 contributes to the Mg(2+) binding site. Residues 145 to 146 (GA), asparagine 174, tyrosine 287, and glutamate 370 each bind thiamine diphosphate. Mg(2+) is bound at residue asparagine 174.

It belongs to the transketolase family. DXPS subfamily. Homodimer. Mg(2+) is required as a cofactor. Requires thiamine diphosphate as cofactor.

The catalysed reaction is D-glyceraldehyde 3-phosphate + pyruvate + H(+) = 1-deoxy-D-xylulose 5-phosphate + CO2. It participates in metabolic intermediate biosynthesis; 1-deoxy-D-xylulose 5-phosphate biosynthesis; 1-deoxy-D-xylulose 5-phosphate from D-glyceraldehyde 3-phosphate and pyruvate: step 1/1. Functionally, catalyzes the acyloin condensation reaction between C atoms 2 and 3 of pyruvate and glyceraldehyde 3-phosphate to yield 1-deoxy-D-xylulose-5-phosphate (DXP). This is 1-deoxy-D-xylulose-5-phosphate synthase from Prochlorococcus marinus subsp. pastoris (strain CCMP1986 / NIES-2087 / MED4).